A 580-amino-acid polypeptide reads, in one-letter code: Fumarate hydratase class I, aerobic (580 aa).

Residues Cys-105, Cys-224, and Cys-318 each coordinate [4Fe-4S] cluster.

Belongs to the class-I fumarase family. Homodimer. [4Fe-4S] cluster serves as cofactor.

The catalysed reaction is (S)-malate = fumarate + H2O. It catalyses the reaction oxaloacetate = enol-oxaloacetate. It functions in the pathway carbohydrate metabolism; tricarboxylic acid cycle; (S)-malate from fumarate: step 1/1. Catalyzes the reversible hydration of fumarate to (S)-malate. Functions as an aerobic enzyme in the direction of malate formation as part of the citric acid cycle. Accounts for about 80% of the fumarase activity when the bacteria grow aerobically. To a lesser extent, also displays D-tartrate dehydratase activity in vitro, but is not able to convert (R)-malate, L-tartrate or meso-tartrate. Can also catalyze the isomerization of enol- to keto-oxaloacetate. This Salmonella typhimurium (strain LT2 / SGSC1412 / ATCC 700720) protein is Fumarate hydratase class I, aerobic.